The following is a 120-amino-acid chain: Seripauperin-24 (120 aa).

The first 20 residues, 1-20 (MVKLTSIAAGVAAIAATASA), serve as a signal peptide directing secretion.

This sequence belongs to the SRP1/TIP1 family. Seripauperin subfamily. Post-translationally, O-glycosylated.

Its subcellular location is the secreted. It localises to the cell wall. Component of the cell wall. The protein is Seripauperin-24 (PAU24) of Saccharomyces cerevisiae (strain ATCC 204508 / S288c) (Baker's yeast).